The primary structure comprises 426 residues: D-tagatose-1,6-bisphosphate aldolase subunit KbaZ (426 aa).

It belongs to the GatZ/KbaZ family. KbaZ subfamily. In terms of assembly, forms a complex with KbaY.

It participates in carbohydrate metabolism; D-tagatose 6-phosphate degradation; D-glyceraldehyde 3-phosphate and glycerone phosphate from D-tagatose 6-phosphate: step 2/2. Its function is as follows. Component of the tagatose-1,6-bisphosphate aldolase KbaYZ that is required for full activity and stability of the Y subunit. Could have a chaperone-like function for the proper and stable folding of KbaY. When expressed alone, KbaZ does not show any aldolase activity. In Escherichia coli (strain SMS-3-5 / SECEC), this protein is D-tagatose-1,6-bisphosphate aldolase subunit KbaZ.